The chain runs to 426 residues: UPF0229 protein YeaH (426 aa).

The span at 78–92 (GNDHFIQNDRIERPQ) shows a compositional bias: basic and acidic residues. Residues 78 to 108 (GNDHFIQNDRIERPQDGGGSGSGNGQASQDG) form a disordered region.

Belongs to the UPF0229 family.

This Salmonella arizonae (strain ATCC BAA-731 / CDC346-86 / RSK2980) protein is UPF0229 protein YeaH.